The primary structure comprises 358 residues: Sulfoquinovosyl glycerol transport ATP-binding protein SmoE (358 aa).

Residues 4 to 234 (VSLRKLDKSY…PESVFVGGFV (231 aa)) enclose the ABC transporter domain. 36 to 43 (GPSGCGKS) is a binding site for ATP.

Belongs to the ABC transporter superfamily. In terms of assembly, the complex is probably composed of two ATP-binding proteins (SmoE), two transmembrane proteins (SmoG and SmoH) and a solute-binding protein (SmoF).

It localises to the cell inner membrane. Part of the ABC transporter complex SmoEFGH involved in sulfoquinovosyl glycerol (SQGro) uptake. Responsible for energy coupling to the transport system. This chain is Sulfoquinovosyl glycerol transport ATP-binding protein SmoE, found in Agrobacterium fabrum (strain C58 / ATCC 33970) (Agrobacterium tumefaciens (strain C58)).